A 355-amino-acid chain; its full sequence is Uroporphyrinogen decarboxylase (355 aa).

Substrate-binding positions include Arg-27–Arg-31, Asp-77, Tyr-154, Thr-209, and His-327.

Belongs to the uroporphyrinogen decarboxylase family. As to quaternary structure, homodimer.

The protein localises to the cytoplasm. The catalysed reaction is uroporphyrinogen III + 4 H(+) = coproporphyrinogen III + 4 CO2. The protein operates within porphyrin-containing compound metabolism; protoporphyrin-IX biosynthesis; coproporphyrinogen-III from 5-aminolevulinate: step 4/4. Catalyzes the decarboxylation of four acetate groups of uroporphyrinogen-III to yield coproporphyrinogen-III. The polypeptide is Uroporphyrinogen decarboxylase (Tolumonas auensis (strain DSM 9187 / NBRC 110442 / TA 4)).